Reading from the N-terminus, the 111-residue chain is UPF0375 protein ule-4 (111 aa).

Positions 1 to 18 (MNSRLVLLLAVSVALVSA) are cleaved as a signal peptide. N23 and N58 each carry an N-linked (GlcNAc...) asparagine glycan.

Belongs to the UPF0375 family.

The protein resides in the secreted. The polypeptide is UPF0375 protein ule-4 (Caenorhabditis elegans).